A 107-amino-acid chain; its full sequence is Small ribosomal subunit protein bS18 (107 aa).

Belongs to the bacterial ribosomal protein bS18 family. In terms of assembly, part of the 30S ribosomal subunit. Forms a tight heterodimer with protein bS6.

Binds as a heterodimer with protein bS6 to the central domain of the 16S rRNA, where it helps stabilize the platform of the 30S subunit. This is Small ribosomal subunit protein bS18 from Mycoplasmopsis agalactiae (strain NCTC 10123 / CIP 59.7 / PG2) (Mycoplasma agalactiae).